A 146-amino-acid chain; its full sequence is Bacterial hemoglobin (146 aa).

In terms of domain architecture, Globin spans 1–138 (MLDQQTINII…IADVFIQVEA (138 aa)). Heme b is bound by residues Gln-53 and His-85.

This sequence belongs to the globin family. In terms of assembly, homodimer.

In terms of biological role, this protein functions as a terminal oxidase. The protein is Bacterial hemoglobin (vhb) of Vitreoscilla stercoraria.